The sequence spans 609 residues: Putative cell agglutination protein pfl4 (609 aa).

Positions 1-21 (MLFLRFFIFTFFTSIFTVVVS) are cleaved as a signal peptide. The N-linked (GlcNAc...) asparagine glycan is linked to N75. Residues 75 to 391 (NHSTIYTTIN…ASTVVVIPTA (317 aa)) form a 9 X 36 AA approximate tandem repeats region. 9 tandem repeats follow at residues 77–110 (STIYTTINSGTVASTYTVTLADGDVVVKDIEPTA), 111–146 (GTVTTTITSGSHEFTTTLAEASGTVPGTVEVVEPLA), 147–182 (GTVTTTIHSGSVEYNTTLATASGTVPGTVEVVEPAV), 183–218 (GTVTTTIYSGSEEFTTTLASASGSISGTVEVIEPTA), 219–254 (GTVTTTIYSGDQEYTTILAEASGTVPGTVEVIEPAV), 255–290 (GTVTTTTYSGSVEYTTTLVPASGSVSGTVEVVEPAV), 291–325 (GTVTTTLQSGSQAFTTTVPASGSVSGTVEVVQPTG), 326–361 (GTVTNTVYEGSQTITSTLATASGTVPGTVEVILPGP), and 362–391 (STIYSGTVATTITYDVSSTPASTVVVIPTA). The N-linked (GlcNAc...) asparagine glycan is linked to N161. The 163-residue stretch at 427-589 (FTQPAYFGSS…NSYNPTSYAY (163 aa)) folds into the PA14 domain.

It belongs to the mam3/map4 family.

It localises to the cell surface. In terms of biological role, may be involved in agglutination during conjugation or other aspects of colony formation. Induces flocculation when overexpressed. The polypeptide is Putative cell agglutination protein pfl4 (Schizosaccharomyces pombe (strain 972 / ATCC 24843) (Fission yeast)).